A 217-amino-acid chain; its full sequence is Uracil-DNA glycosylase (217 aa).

Catalysis depends on Asp62, which acts as the Proton acceptor.

It belongs to the uracil-DNA glycosylase (UDG) superfamily. UNG family.

Its subcellular location is the cytoplasm. It carries out the reaction Hydrolyzes single-stranded DNA or mismatched double-stranded DNA and polynucleotides, releasing free uracil.. Excises uracil residues from the DNA which can arise as a result of misincorporation of dUMP residues by DNA polymerase or due to deamination of cytosine. The chain is Uracil-DNA glycosylase from Streptococcus equi subsp. equi (strain 4047).